We begin with the raw amino-acid sequence, 177 residues long: ATP synthase subunit delta (177 aa).

It belongs to the ATPase delta chain family. As to quaternary structure, F-type ATPases have 2 components, F(1) - the catalytic core - and F(0) - the membrane proton channel. F(1) has five subunits: alpha(3), beta(3), gamma(1), delta(1), epsilon(1). F(0) has three main subunits: a(1), b(2) and c(10-14). The alpha and beta chains form an alternating ring which encloses part of the gamma chain. F(1) is attached to F(0) by a central stalk formed by the gamma and epsilon chains, while a peripheral stalk is formed by the delta and b chains.

It is found in the cell inner membrane. F(1)F(0) ATP synthase produces ATP from ADP in the presence of a proton or sodium gradient. F-type ATPases consist of two structural domains, F(1) containing the extramembraneous catalytic core and F(0) containing the membrane proton channel, linked together by a central stalk and a peripheral stalk. During catalysis, ATP synthesis in the catalytic domain of F(1) is coupled via a rotary mechanism of the central stalk subunits to proton translocation. Functionally, this protein is part of the stalk that links CF(0) to CF(1). It either transmits conformational changes from CF(0) to CF(1) or is implicated in proton conduction. This chain is ATP synthase subunit delta, found in Shewanella woodyi (strain ATCC 51908 / MS32).